The following is a 102-amino-acid chain: Small ribosomal subunit protein uS10 (102 aa).

It belongs to the universal ribosomal protein uS10 family. In terms of assembly, part of the 30S ribosomal subunit.

Functionally, involved in the binding of tRNA to the ribosomes. The sequence is that of Small ribosomal subunit protein uS10 from Rhodopseudomonas palustris (strain BisB18).